The chain runs to 135 residues: Endoribonuclease YbeY (135 aa).

Zn(2+) is bound by residues His94, His98, and His104.

This sequence belongs to the endoribonuclease YbeY family. Requires Zn(2+) as cofactor.

The protein resides in the cytoplasm. In terms of biological role, single strand-specific metallo-endoribonuclease involved in late-stage 70S ribosome quality control and in maturation of the 3' terminus of the 16S rRNA. In Campylobacter jejuni subsp. jejuni serotype O:2 (strain ATCC 700819 / NCTC 11168), this protein is Endoribonuclease YbeY.